The chain runs to 336 residues: Peroxidase 11 (336 aa).

Positions 1 to 20 (MMRLLFVFFMVHTIFIPCFS) are cleaved as a signal peptide. 4 disulfide bridges follow: C39/C119, C72/C77, C125/C331, and C204/C236. H70 serves as the catalytic Proton acceptor. 5 residues coordinate Ca(2+): D71, V74, G76, D78, and S80. Residue P167 coordinates substrate. H197 contributes to the heme b binding site. A Ca(2+)-binding site is contributed by T198. N246 carries an N-linked (GlcNAc...) asparagine glycan. The Ca(2+) site is built by D251, T254, and D259.

It belongs to the peroxidase family. Classical plant (class III) peroxidase subfamily. Heme b is required as a cofactor. The cofactor is Ca(2+). In terms of tissue distribution, expressed in roots and stems.

Its subcellular location is the secreted. The enzyme catalyses 2 a phenolic donor + H2O2 = 2 a phenolic radical donor + 2 H2O. In terms of biological role, removal of H(2)O(2), oxidation of toxic reductants, biosynthesis and degradation of lignin, suberization, auxin catabolism, response to environmental stresses such as wounding, pathogen attack and oxidative stress. These functions might be dependent on each isozyme/isoform in each plant tissue. The sequence is that of Peroxidase 11 (PER11) from Arabidopsis thaliana (Mouse-ear cress).